The primary structure comprises 386 residues: Histone-lysine N-methyltransferase SETD7 (386 aa).

Positions 1-12 (MDSSDDEIACDE) are enriched in acidic residues. A disordered region spans residues 1–21 (MDSSDDEIACDEGDYKGAKDD). MORN repeat units follow at residues 15–38 (YKGAKDDNDLPHGLGKVKFSSGDE), 39–61 (FIGAFEHGIKCGPGKFHFFDDST), 62–84 (LEGNYVDGELHGIGIYTNDDGSI), and 109–131 (FRGQYSEGVRCGLCFYYFPDGGS). Residues 222 to 344 (ELVYAAPSKI…EGDELTVHYT (123 aa)) form the SET domain. Residues 234-236 (AGE), asparagine 304, and histidine 305 contribute to the S-adenosyl-L-methionine site.

It belongs to the class V-like SAM-binding methyltransferase superfamily. Histone-lysine methyltransferase family. SET7 subfamily.

It is found in the nucleus. The protein resides in the chromosome. The enzyme catalyses L-lysyl(4)-[histone H3] + S-adenosyl-L-methionine = N(6)-methyl-L-lysyl(4)-[histone H3] + S-adenosyl-L-homocysteine + H(+). The catalysed reaction is L-lysyl-[protein] + S-adenosyl-L-methionine = N(6)-methyl-L-lysyl-[protein] + S-adenosyl-L-homocysteine + H(+). Histone methyltransferase that specifically monomethylates 'Lys-4' of histone H3. H3 'Lys-4' methylation represents a specific tag for epigenetic transcriptional activation. Plays a central role in the transcriptional activation of genes. Also has methyltransferase activity toward non-histone proteins. In Halocynthia roretzi (Sea squirt), this protein is Histone-lysine N-methyltransferase SETD7 (setd7).